The chain runs to 752 residues: MAKRSRSEDEDDDLQYADHDYEVPQQKGLKKLWNRVKWTRDEDDKLKKLVEQHGTDDWTLIASHLQNRSDFQCQHRWQKVLNPELIKGPWTKEEDQRVIELVQKYGPKRWSLIAKHLKGRIGKQCRERWHNHLNPEVKKSSWTEEEDRIIYEAHKRLGNRWAEIAKLLPGRTDNSIKNHWNSTMRRKVEQEGYLQDGIKSERSSSKLQHKPCAAMDHMQTQNQFYIPVQIPGYQYVSPEGNCIEHVQPTSAFIQQPFIDEDPDKEKKIKELEMLLMSAENEVRRKRIPSQPGSFSSWSGSFLMDDNMSNTLNSLDEHTSEFYSMDENQPVSAQQNSPTKFLAVEANAVLSSLQTIPEFAETLELIESDPVAWSDVTSFDISDAAASPIKSTPVKLMRIQHNEGAMECQFNVSLVLEGKKNTCNGGNSEAVPLTSPNIAKFSTPPAILRKKRKMRVGHSPGSELRDGSLNDGGNMALKHTPLKTLPFSPSQFFNTCPGNEQLNIENPSFTSTPICGQKALITTPLHKETTPKDQKENVGFRTPTIRRSILGTTPRTPTPFKNALAAQEKKYGPLKIVSQPLAFLEEDIREVLKEETGTDLFLKEEDEPAYKSCKQENTASGKKVRKSLVLDNWEKEESGTQLLTEDISDMQSENRFTTSLLMIPLLEIHDNRCNLIPEKQDINSTNKTYTLTKKKPNPNTSKVVKLEKNLQSNCEWETVVYGKTEDQLIMTEQARRYLSTYTATSSTSRALIL.

Residues 1-22 (MAKRSRSEDEDDDLQYADHDYE) are disordered. HTH myb-type domains follow at residues 30 to 81 (KKLW…QKVL), 82 to 137 (NPEL…NPEV), and 138 to 188 (KKSS…RRKV). 3 consecutive DNA-binding regions (H-T-H motif) follow at residues 58 to 81 (WTLIASHLQNRSDFQCQHRWQKVL), 110 to 133 (WSLIAKHLKGRIGKQCRERWHNHL), and 161 to 184 (WAEIAKLLPGRTDNSIKNHWNSTM). Lys199 participates in a covalent cross-link: Glycyl lysine isopeptide (Lys-Gly) (interchain with G-Cter in SUMO2). The interval 230-295 (IPGYQYVSPE…RIPSQPGSFS (66 aa)) is transcriptional activation domain. Residues 298–553 (SGSFLMDDNM…IRRSILGTTP (256 aa)) are negative regulatory domain. N6-acetyllysine is present on Lys394. Positions 451–480 (RKMRVGHSPGSELRDGSLNDGGNMALKHTP) are disordered. Glycyl lysine isopeptide (Lys-Gly) (interchain with G-Cter in SUMO2) cross-links involve residues Lys592 and Lys602.

Component of the DREAM complex (also named LINC complex) at least composed of E2F4, E2F5, LIN9, LIN37, LIN52, LIN54, MYBL1, MYBL2, RBL1, RBL2, RBBP4, TFDP1 and TFDP2. The complex exists in quiescent cells where it represses cell cycle-dependent genes. It dissociates in S phase when LIN9, LIN37, LIN52 and LIN54 form a subcomplex that binds to MYBL2. As to expression, expressed in a variety of lymphoid and solid tumor lines cultured in vitro.

It localises to the nucleus. Transcription factor that specifically recognizes the sequence 5'-YAAC[GT]G-3'. Acts as a master regulator of male meiosis by promoting expression of piRNAs: activates expression of both piRNA precursor RNAs and expression of protein-coding genes involved in piRNA metabolism. The piRNA metabolic process mediates the repression of transposable elements during meiosis by forming complexes composed of piRNAs and Piwi proteins and governs the methylation and subsequent repression of transposons, which is essential for the germline integrity. Transcriptional activator of SOX30. This Homo sapiens (Human) protein is Myb-related protein A (MYBL1).